Here is a 366-residue protein sequence, read N- to C-terminus: MKFNSHIENLPIYEAGKPIELVIREFGIDQNDIIKLASNENPLGTSKKVIEKIKNVAQNSSLYPDDSYYELKDGLSNLYKVEPKNVIIGSGSDQIIEFALHAKANEKKGILVSGVTFAMYEIYAKHVGAKIYKTKSKEHNLAEFREIYRTNKNDISVIFLCLPNNPLGECLDADEVFSFIKDVSEDTLVVIDGAYMEFAKFKSSKKEIDPKTLIQTFSNALYLGTFSKAYGLGGMRVGYGIANEEIIKALHRLRAPFNITTLSLAAAIEALKDNDFLKETLENNFKEMKVYEEFAKENSIEFIESYTNFITFIFDQHQNATKICDNLLKQGIILRNLKSYSMNAIRITIGKNEQNRRVLDMLKKEI.

An N6-(pyridoxal phosphate)lysine modification is found at Lys-228.

The protein belongs to the class-II pyridoxal-phosphate-dependent aminotransferase family. Histidinol-phosphate aminotransferase subfamily. Homodimer. Pyridoxal 5'-phosphate serves as cofactor.

The catalysed reaction is L-histidinol phosphate + 2-oxoglutarate = 3-(imidazol-4-yl)-2-oxopropyl phosphate + L-glutamate. It participates in amino-acid biosynthesis; L-histidine biosynthesis; L-histidine from 5-phospho-alpha-D-ribose 1-diphosphate: step 7/9. The sequence is that of Histidinol-phosphate aminotransferase from Campylobacter fetus subsp. fetus (strain 82-40).